The primary structure comprises 686 residues: Methionine--tRNA ligase (686 aa).

Positions 15-25 match the 'HIGH' region motif; that stretch reads PYTNGPIHIGH. Cys-147, Cys-150, Cys-160, and Cys-163 together coordinate Zn(2+). The 'KMSKS' region signature appears at 336-340; it reads KLSTS. Thr-339 contacts ATP. The tRNA-binding domain occupies 584 to 686; the sequence is DFAKMDLRVG…AGVGNGEGIN (103 aa).

The protein belongs to the class-I aminoacyl-tRNA synthetase family. MetG type 1 subfamily. Homodimer. Zn(2+) is required as a cofactor.

The protein localises to the cytoplasm. It carries out the reaction tRNA(Met) + L-methionine + ATP = L-methionyl-tRNA(Met) + AMP + diphosphate. Is required not only for elongation of protein synthesis but also for the initiation of all mRNA translation through initiator tRNA(fMet) aminoacylation. This chain is Methionine--tRNA ligase, found in Flavobacterium psychrophilum (strain ATCC 49511 / DSM 21280 / CIP 103535 / JIP02/86).